We begin with the raw amino-acid sequence, 308 residues long: Isoaspartyl peptidase/L-asparaginase (308 aa).

N-acetylmethionine is present on Met1. The active-site Nucleophile is the Thr168. Substrate-binding positions include 196 to 199 (RVGD) and 219 to 222 (TGHG).

This sequence belongs to the Ntn-hydrolase family. Heterodimer of an alpha and beta chain produced by autocleavage. This heterodimer may then dimerize in turn, giving rise to a heterotetramer. In terms of processing, cleaved into an alpha and beta chain by autocatalysis; this activates the enzyme. The N-terminal residue of the beta subunit is responsible for the nucleophile hydrolase activity. Expressed in brain, kidney, testis and tissues of the gastrointestinal tract. Present in sperm (at protein level). Over-expressed in uterine, mammary, prostatic and ovarian carcinoma.

The protein resides in the cytoplasm. It catalyses the reaction L-asparagine + H2O = L-aspartate + NH4(+). It carries out the reaction Cleavage of a beta-linked Asp residue from the N-terminus of a polypeptide.. With respect to regulation, glycine accelerates autocleavage into an alpha and beta chain. In terms of biological role, has both L-asparaginase and beta-aspartyl peptidase activity. May be involved in the production of L-aspartate, which can act as an excitatory neurotransmitter in some brain regions. Is highly active with L-Asp beta-methyl ester. Besides, has catalytic activity toward beta-aspartyl dipeptides and their methyl esters, including beta-L-Asp-L-Phe, beta-L-Asp-L-Phe methyl ester (aspartame), beta-L-Asp-L-Ala, beta-L-Asp-L-Leu and beta-L-Asp-L-Lys. Does not have aspartylglucosaminidase activity and is inactive toward GlcNAc-L-Asn. Likewise, has no activity toward glutamine. The protein is Isoaspartyl peptidase/L-asparaginase (ASRGL1) of Homo sapiens (Human).